The following is a 61-amino-acid chain: Small ribosomal subunit protein uS14 (61 aa).

Residues Cys-24, Cys-27, Cys-40, and Cys-43 each coordinate Zn(2+).

The protein belongs to the universal ribosomal protein uS14 family. Zinc-binding uS14 subfamily. In terms of assembly, part of the 30S ribosomal subunit. Contacts proteins S3 and S10. Zn(2+) is required as a cofactor.

In terms of biological role, binds 16S rRNA, required for the assembly of 30S particles and may also be responsible for determining the conformation of the 16S rRNA at the A site. The sequence is that of Small ribosomal subunit protein uS14 from Clostridium beijerinckii (strain ATCC 51743 / NCIMB 8052) (Clostridium acetobutylicum).